The primary structure comprises 132 residues: Small ribosomal subunit protein uS12 (132 aa).

Position 89 is a 3-methylthioaspartic acid (D89). The segment at 103–132 (DTSGVADRRQSRSKYGAKQPKEGGAAKGKK) is disordered.

This sequence belongs to the universal ribosomal protein uS12 family. Part of the 30S ribosomal subunit. Contacts proteins S8 and S17. May interact with IF1 in the 30S initiation complex.

Functionally, with S4 and S5 plays an important role in translational accuracy. Interacts with and stabilizes bases of the 16S rRNA that are involved in tRNA selection in the A site and with the mRNA backbone. Located at the interface of the 30S and 50S subunits, it traverses the body of the 30S subunit contacting proteins on the other side and probably holding the rRNA structure together. The combined cluster of proteins S8, S12 and S17 appears to hold together the shoulder and platform of the 30S subunit. The polypeptide is Small ribosomal subunit protein uS12 (Chlorobium phaeovibrioides (strain DSM 265 / 1930) (Prosthecochloris vibrioformis (strain DSM 265))).